The primary structure comprises 98 residues: uncharacterized protein (98 aa).

A run of 2 helical transmembrane segments spans residues 13–33 and 65–85; these read LFSL…IAIF and IMVI…IFIS.

The protein resides in the membrane. This is an uncharacterized protein from Saccharomyces cerevisiae (strain ATCC 204508 / S288c) (Baker's yeast).